Here is a 543-residue protein sequence, read N- to C-terminus: Myotubularin-related protein 9-like (543 aa).

The Myotubularin phosphatase domain maps to 124-502 (AWHFHPPECY…QSLRLWQGLF (379 aa)).

This sequence belongs to the protein-tyrosine phosphatase family. Non-receptor class myotubularin subfamily.

In terms of biological role, probable pseudophosphatase. The sequence is that of Myotubularin-related protein 9-like from Bos taurus (Bovine).